Consider the following 428-residue polypeptide: Serine--tRNA ligase (428 aa).

Position 237 to 239 (237 to 239 (TAE)) interacts with L-serine. ATP is bound at residue 268–270 (RSE). Glu291 provides a ligand contact to L-serine. Residue 355–358 (EISS) participates in ATP binding. Ser390 provides a ligand contact to L-serine.

The protein belongs to the class-II aminoacyl-tRNA synthetase family. Type-1 seryl-tRNA synthetase subfamily. As to quaternary structure, homodimer. The tRNA molecule binds across the dimer.

Its subcellular location is the cytoplasm. The enzyme catalyses tRNA(Ser) + L-serine + ATP = L-seryl-tRNA(Ser) + AMP + diphosphate + H(+). It catalyses the reaction tRNA(Sec) + L-serine + ATP = L-seryl-tRNA(Sec) + AMP + diphosphate + H(+). It functions in the pathway aminoacyl-tRNA biosynthesis; selenocysteinyl-tRNA(Sec) biosynthesis; L-seryl-tRNA(Sec) from L-serine and tRNA(Sec): step 1/1. Catalyzes the attachment of serine to tRNA(Ser). Is also able to aminoacylate tRNA(Sec) with serine, to form the misacylated tRNA L-seryl-tRNA(Sec), which will be further converted into selenocysteinyl-tRNA(Sec). This is Serine--tRNA ligase from Hydrogenovibrio crunogenus (strain DSM 25203 / XCL-2) (Thiomicrospira crunogena).